Reading from the N-terminus, the 272-residue chain is F-box protein PP2-B10 (272 aa).

The 47-residue stretch at 11 to 57 folds into the F-box domain; the sequence is SSPFDSFPEDCISYIISFTNPRDACVAATVSKTFESTVKSDIIWEKF.

As to quaternary structure, part of a SCF (ASK-cullin-F-box) protein ligase complex. Interacts with SKP1B/ASK2, ASK11 and ASK12.

Its pathway is protein modification; protein ubiquitination. In terms of biological role, component of SCF(ASK-cullin-F-box) E3 ubiquitin ligase complexes, which may mediate the ubiquitination and subsequent proteasomal degradation of target proteins. This is F-box protein PP2-B10 (PP2B10) from Arabidopsis thaliana (Mouse-ear cress).